Consider the following 575-residue polypeptide: V-type ATP synthase alpha chain (575 aa).

Residue 238–245 (GPFGAGKT) coordinates ATP.

It belongs to the ATPase alpha/beta chains family.

The enzyme catalyses ATP + H2O + 4 H(+)(in) = ADP + phosphate + 5 H(+)(out). In terms of biological role, produces ATP from ADP in the presence of a proton gradient across the membrane. The V-type alpha chain is a catalytic subunit. The sequence is that of V-type ATP synthase alpha chain (atpA) from Borreliella burgdorferi (strain ATCC 35210 / DSM 4680 / CIP 102532 / B31) (Borrelia burgdorferi).